A 476-amino-acid chain; its full sequence is Stromelysin-2 (476 aa).

Positions 1-17 (MMHLAFLVLLCLPVCSA) are cleaved as a signal peptide. Residues 18 to 98 (YPLSGAAKEE…PRCGVPDVGH (81 aa)) constitute a propeptide, activation peptide. Positions 89–96 (PRCGVPDV) match the Cysteine switch motif. Zn(2+)-binding residues include cysteine 91, histidine 167, aspartate 169, histidine 182, histidine 195, and histidine 217. The active site involves glutamate 218. Residues histidine 221 and histidine 227 each contribute to the Zn(2+) site. Hemopexin repeat units lie at residues 286–335 (PAKC…WPSL), 336–382 (PSYL…GFPP), 384–432 (IRKI…FPGV), and 433–476 (EPKV…WLHC). A disulfide bond links cysteine 289 and cysteine 476.

The protein belongs to the peptidase M10A family. Zn(2+) serves as cofactor. Requires Ca(2+) as cofactor.

It is found in the secreted. Its subcellular location is the extracellular space. It localises to the extracellular matrix. The catalysed reaction is Similar to stromelysin 1, but action on collagen types III, IV and V is weak.. Functionally, can degrade fibronectin, gelatins of type I, III, IV, and V; weakly collagens III, IV, and V. Activates procollagenase. The polypeptide is Stromelysin-2 (MMP10) (Homo sapiens (Human)).